The chain runs to 152 residues: Nucleoside diphosphate kinase B (152 aa).

Residues 1–66 are interaction with AKAP13; that stretch reads MANLERTFIA…DRPFFPGLVK (66 aa). ATP is bound by residues lysine 12, phenylalanine 60, arginine 88, threonine 94, arginine 105, and asparagine 115. The active-site Pros-phosphohistidine intermediate is the histidine 118.

This sequence belongs to the NDK family. In terms of assembly, hexamer of two different chains: An and B (A6, A5B, A4B2, A3B3, A2B4, AB5, B6). Interacts with CAPN8. Interacts with AKAP13. Interacts with ITGB1BP1 (via C-terminal domain region). Interacts with BCL2L10. Mg(2+) is required as a cofactor. As to expression, ubiquitously expressed.

Its subcellular location is the cytoplasm. It localises to the cell projection. The protein resides in the lamellipodium. It is found in the ruffle. The protein localises to the perinuclear region. Its subcellular location is the nucleus. The catalysed reaction is a 2'-deoxyribonucleoside 5'-diphosphate + ATP = a 2'-deoxyribonucleoside 5'-triphosphate + ADP. It catalyses the reaction a ribonucleoside 5'-diphosphate + ATP = a ribonucleoside 5'-triphosphate + ADP. It carries out the reaction ATP + protein L-histidine = ADP + protein N-phospho-L-histidine.. Its function is as follows. Major role in the synthesis of nucleoside triphosphates other than ATP. The ATP gamma phosphate is transferred to the NDP beta phosphate via a ping-pong mechanism, using a phosphorylated active-site intermediate. Negatively regulates Rho activity by interacting with AKAP13/LBC. Acts as a transcriptional activator of the MYC gene; binds DNA non-specifically. Binds to both single-stranded guanine- and cytosine-rich strands within the nuclease hypersensitive element (NHE) III(1) region of the MYC gene promoter. Does not bind to duplex NHE III(1). Has G-quadruplex (G4) DNA-binding activity, which is independent of its nucleotide-binding and kinase activity. Binds both folded and unfolded G4 with similar low nanomolar affinities. Stabilizes folded G4s regardless of whether they are prefolded or not. Exhibits histidine protein kinase activity. The chain is Nucleoside diphosphate kinase B (NME2) from Homo sapiens (Human).